The primary structure comprises 56 residues: Large ribosomal subunit protein bL32 (56 aa).

The tract at residues 1-26 (MAVQKSKVTRSRRGQRRSHDALTAAA) is disordered. A compositionally biased stretch (basic residues) spans 7–16 (KVTRSRRGQR).

Belongs to the bacterial ribosomal protein bL32 family.

This chain is Large ribosomal subunit protein bL32 (rpmF), found in Moritella marina (Vibrio marinus).